The sequence spans 111 residues: PCNA-associated factor (111 aa).

Position 8 is a phosphoserine (serine 8). Lysine 15 participates in a covalent cross-link: Glycyl lysine isopeptide (Lys-Gly) (interchain with G-Cter in ubiquitin). Positions 23–34 (RKVLGSSTSATN) match the D-box motif. Residues 23–111 (RKVLGSSTSA…QPDHTNDEKE (89 aa)) are disordered. At lysine 24 the chain carries N6-acetyllysine; alternate. A Glycyl lysine isopeptide (Lys-Gly) (interchain with G-Cter in ubiquitin); alternate cross-link involves residue lysine 24. Serine 28, serine 31, and serine 72 each carry phosphoserine. Residues 28–40 (SSTSATNSTSVSS) are compositionally biased toward low complexity. The PIP-box motif lies at 62–72 (QKGIGEFFRLS). Residues 72-81 (SPKDSEKENQ) show a composition bias toward basic and acidic residues. Positions 78–80 (KEN) match the KEN box motif. The Initiation motif motif lies at 85-97 (EAGSSGLGKAKRK).

In terms of assembly, interacts (when monoubiquitinated at Lys-15 and Lys-24) with PCNA. Interacts with isoform 2/p33ING1b of ING1. Interacts with BRCA1. In terms of processing, monoubiquitinated at Lys-15 and Lys-24 during normal S phase, promoting its association with PCNA. Also diubiquitinated at these 2 sites. Following DNA damage, monoubiquitin chains at Lys-15 and Lys-24 are probably extended, leading to disrupt the interaction with PCNA. Polyubiquitinated by the APC/C complex at the mitotic exit, leading to its degradation by the proteasome. In terms of tissue distribution, expressed predominantly in liver, pancreas and placenta. Not detected in heart or brain. Highly expressed in a number of tumors, especially esophageal tumors, in anaplastic thyroid carcinomas, adrenocortical carcinomas, and in non-small-cell lung cancer lines.

It is found in the nucleus. Its subcellular location is the cytoplasm. It localises to the perinuclear region. In terms of biological role, PCNA-binding protein that acts as a regulator of DNA repair during DNA replication. Following DNA damage, the interaction with PCNA is disrupted, facilitating the interaction between monoubiquitinated PCNA and the translesion DNA synthesis DNA polymerase eta (POLH) at stalled replisomes, facilitating the bypass of replication-fork-blocking lesions. Also acts as a regulator of centrosome number. This Homo sapiens (Human) protein is PCNA-associated factor.